The following is a 404-amino-acid chain: Putative CBL-interacting protein kinase 27 (404 aa).

The Protein kinase domain maps to 11–266 (YEMGRVLGHG…VAGLLETPWF (256 aa)). Residues 17 to 25 (LGHGNFGRV) and K40 contribute to the ATP site. The Proton acceptor role is filled by D134. An activation loop region spans residues 152 to 181 (DFGLSALACHARPDGLLHTACGTPAYVAPE). An NAF domain is found at 294–321 (DKDEPPEVLNAFHLISLSEGFDLSPLFE). The segment at 335-356 (AGGTRFATREAASGVVARLEAL) is PPI.

Belongs to the protein kinase superfamily. CAMK Ser/Thr protein kinase family. SNF1 subfamily. The cofactor is Mn(2+).

It carries out the reaction L-seryl-[protein] + ATP = O-phospho-L-seryl-[protein] + ADP + H(+). It catalyses the reaction L-threonyl-[protein] + ATP = O-phospho-L-threonyl-[protein] + ADP + H(+). Its function is as follows. CIPK serine-threonine protein kinases interact with CBL proteins. Binding of a CBL protein to the regulatory NAF domain of CIPK protein lead to the activation of the kinase in a calcium-dependent manner. The polypeptide is Putative CBL-interacting protein kinase 27 (CIPK27) (Oryza sativa subsp. japonica (Rice)).